We begin with the raw amino-acid sequence, 133 residues long: Aspartate 1-decarboxylase (133 aa).

The active-site Schiff-base intermediate with substrate; via pyruvic acid is serine 26. A Pyruvic acid (Ser) modification is found at serine 26. Threonine 58 lines the substrate pocket. Tyrosine 59 acts as the Proton donor in catalysis. A substrate-binding site is contributed by 74–76; sequence GAA.

It belongs to the PanD family. As to quaternary structure, heterooctamer of four alpha and four beta subunits. The cofactor is pyruvate. In terms of processing, is synthesized initially as an inactive proenzyme, which is activated by self-cleavage at a specific serine bond to produce a beta-subunit with a hydroxyl group at its C-terminus and an alpha-subunit with a pyruvoyl group at its N-terminus.

Its subcellular location is the cytoplasm. It carries out the reaction L-aspartate + H(+) = beta-alanine + CO2. It participates in cofactor biosynthesis; (R)-pantothenate biosynthesis; beta-alanine from L-aspartate: step 1/1. In terms of biological role, catalyzes the pyruvoyl-dependent decarboxylation of aspartate to produce beta-alanine. The chain is Aspartate 1-decarboxylase from Legionella pneumophila (strain Lens).